The following is a 77-amino-acid chain: MSVAFVPDWLRGKAEVNQETIQRLLEENDQLIRCIVEYQNKGRGNECVQYQHVLHRNLIYLATIADASPTSTSKAME.

Residues Tyr50–Val53 carry the SH2-binding motif.

It belongs to the SS18 family.

The chain is SS18-like protein 2 (SS18L2) from Homo sapiens (Human).